The chain runs to 227 residues: Ashwin (227 aa).

Residues L71 to R84 are compositionally biased toward basic and acidic residues. The interval L71–P227 is disordered. Low complexity predominate over residues S88–D98. Polar residues predominate over residues G153 to G173. Residues S178–N191 are compositionally biased toward low complexity. The segment covering G204–K219 has biased composition (basic and acidic residues).

It belongs to the ashwin family.

The protein resides in the nucleus. The protein is Ashwin of Danio rerio (Zebrafish).